Consider the following 438-residue polypeptide: ATP phosphoribosyltransferase regulatory subunit (438 aa).

It belongs to the class-II aminoacyl-tRNA synthetase family. HisZ subfamily. As to quaternary structure, heteromultimer composed of HisG and HisZ subunits.

It localises to the cytoplasm. Its pathway is amino-acid biosynthesis; L-histidine biosynthesis; L-histidine from 5-phospho-alpha-D-ribose 1-diphosphate: step 1/9. Required for the first step of histidine biosynthesis. May allow the feedback regulation of ATP phosphoribosyltransferase activity by histidine. The sequence is that of ATP phosphoribosyltransferase regulatory subunit from Geobacter sulfurreducens (strain ATCC 51573 / DSM 12127 / PCA).